The primary structure comprises 155 residues: Endoribonuclease YbeY (155 aa).

Zn(2+)-binding residues include His-114, His-118, and His-124.

It belongs to the endoribonuclease YbeY family. It depends on Zn(2+) as a cofactor.

It localises to the cytoplasm. In terms of biological role, single strand-specific metallo-endoribonuclease involved in late-stage 70S ribosome quality control and in maturation of the 3' terminus of the 16S rRNA. The chain is Endoribonuclease YbeY from Escherichia coli O1:K1 / APEC.